A 112-amino-acid polypeptide reads, in one-letter code: Omega-agatoxin-1A (112 aa).

Positions 1-19 are cleaved as a signal peptide; that stretch reads MMKFVVFLACLFVAAHSFA. The propeptide occupies 20-36; that stretch reads VEGEEEYFEAEVPELER. A propeptide spans 103-109 (glu-rich); sequence RSEESER.

The protein belongs to the neurotoxin 04 (omega-agtx) family. 01 (type I omega-agtx) subfamily. In terms of assembly, heterodimer of two subunits, a major chain and a minor chain, linked by a disulfide bond. Proteolytically processed to yield the major and the minor chains. Expressed by the venom gland.

It is found in the secreted. In terms of biological role, omega-agatoxins are antagonists of voltage-gated calcium channels. They block insect neuromuscular transmission presynaptically. This toxin is a blocker of L-type calcium channels (Cav/CACNA1). This chain is Omega-agatoxin-1A, found in Agelenopsis aperta (North American funnel-web spider).